The sequence spans 192 residues: Fe/S biogenesis protein NfuA (192 aa).

Residues C149 and C152 each contribute to the [4Fe-4S] cluster site.

This sequence belongs to the NfuA family. Homodimer. The cofactor is [4Fe-4S] cluster.

Its function is as follows. Involved in iron-sulfur cluster biogenesis. Binds a 4Fe-4S cluster, can transfer this cluster to apoproteins, and thereby intervenes in the maturation of Fe/S proteins. Could also act as a scaffold/chaperone for damaged Fe/S proteins. This is Fe/S biogenesis protein NfuA from Pseudoalteromonas atlantica (strain T6c / ATCC BAA-1087).